A 275-amino-acid chain; its full sequence is Hydroxyethylthiazole kinase (275 aa).

Met-50 is a binding site for substrate. ATP is bound by residues Arg-126 and Ser-171. Ala-200 is a binding site for substrate.

This sequence belongs to the Thz kinase family. It depends on Mg(2+) as a cofactor.

The enzyme catalyses 5-(2-hydroxyethyl)-4-methylthiazole + ATP = 4-methyl-5-(2-phosphooxyethyl)-thiazole + ADP + H(+). The protein operates within cofactor biosynthesis; thiamine diphosphate biosynthesis; 4-methyl-5-(2-phosphoethyl)-thiazole from 5-(2-hydroxyethyl)-4-methylthiazole: step 1/1. Catalyzes the phosphorylation of the hydroxyl group of 4-methyl-5-beta-hydroxyethylthiazole (THZ). This chain is Hydroxyethylthiazole kinase, found in Acinetobacter baumannii (strain SDF).